The primary structure comprises 1377 residues: DNA-directed RNA polymerase subunit beta (1377 aa).

The protein belongs to the RNA polymerase beta chain family. The RNAP catalytic core consists of 2 alpha, 1 beta, 1 beta' and 1 omega subunit. When a sigma factor is associated with the core the holoenzyme is formed, which can initiate transcription.

It catalyses the reaction RNA(n) + a ribonucleoside 5'-triphosphate = RNA(n+1) + diphosphate. In terms of biological role, DNA-dependent RNA polymerase catalyzes the transcription of DNA into RNA using the four ribonucleoside triphosphates as substrates. The sequence is that of DNA-directed RNA polymerase subunit beta from Campylobacter lari (strain RM2100 / D67 / ATCC BAA-1060).